Consider the following 319-residue polypeptide: 4-hydroxy-3-methylbut-2-enyl diphosphate reductase (319 aa).

Position 15 (cysteine 15) interacts with [4Fe-4S] cluster. The (2E)-4-hydroxy-3-methylbut-2-enyl diphosphate site is built by histidine 44 and histidine 77. Dimethylallyl diphosphate contacts are provided by histidine 44 and histidine 77. Isopentenyl diphosphate contacts are provided by histidine 44 and histidine 77. Cysteine 99 serves as a coordination point for [4Fe-4S] cluster. Histidine 127 contacts (2E)-4-hydroxy-3-methylbut-2-enyl diphosphate. Dimethylallyl diphosphate is bound at residue histidine 127. Isopentenyl diphosphate is bound at residue histidine 127. The active-site Proton donor is the glutamate 129. Threonine 172 provides a ligand contact to (2E)-4-hydroxy-3-methylbut-2-enyl diphosphate. Cysteine 202 contributes to the [4Fe-4S] cluster binding site. (2E)-4-hydroxy-3-methylbut-2-enyl diphosphate is bound by residues serine 230, serine 231, asparagine 232, and serine 274. Positions 230, 231, 232, and 274 each coordinate dimethylallyl diphosphate. 4 residues coordinate isopentenyl diphosphate: serine 230, serine 231, asparagine 232, and serine 274.

Belongs to the IspH family. It depends on [4Fe-4S] cluster as a cofactor.

It catalyses the reaction isopentenyl diphosphate + 2 oxidized [2Fe-2S]-[ferredoxin] + H2O = (2E)-4-hydroxy-3-methylbut-2-enyl diphosphate + 2 reduced [2Fe-2S]-[ferredoxin] + 2 H(+). The catalysed reaction is dimethylallyl diphosphate + 2 oxidized [2Fe-2S]-[ferredoxin] + H2O = (2E)-4-hydroxy-3-methylbut-2-enyl diphosphate + 2 reduced [2Fe-2S]-[ferredoxin] + 2 H(+). It functions in the pathway isoprenoid biosynthesis; dimethylallyl diphosphate biosynthesis; dimethylallyl diphosphate from (2E)-4-hydroxy-3-methylbutenyl diphosphate: step 1/1. It participates in isoprenoid biosynthesis; isopentenyl diphosphate biosynthesis via DXP pathway; isopentenyl diphosphate from 1-deoxy-D-xylulose 5-phosphate: step 6/6. Functionally, catalyzes the conversion of 1-hydroxy-2-methyl-2-(E)-butenyl 4-diphosphate (HMBPP) into a mixture of isopentenyl diphosphate (IPP) and dimethylallyl diphosphate (DMAPP). Acts in the terminal step of the DOXP/MEP pathway for isoprenoid precursor biosynthesis. This is 4-hydroxy-3-methylbut-2-enyl diphosphate reductase from Xanthomonas euvesicatoria pv. vesicatoria (strain 85-10) (Xanthomonas campestris pv. vesicatoria).